The chain runs to 671 residues: MDLTKMGMIQLQNPNHPNALLHKANQMRLAGTLCDVVIMVDSQEFHAHRTVLACTSKMFEILFHRNSQHYTLDFLSPKTFQQILEYAYTATLQAKVEDLDDLLYAAEILEIEYLEEQCLKILETIQSSDENDTEVNMNDGGTEDDEERKGRHGRNLVGSKKHSTEESGYVSAAQQALALPGMVDQSPSVSTSFGLSTMSPTKAAVDSLMSIGQSLLQSTMHPGVGAEQPLHGNSHPMMGEIKTEMMQVDESGEHESPKAMESIASSNGERSGEPDKNRDGPGTPTRSSVITSARELHYVRDEGLGDQQAEVSQMGLEAMAGMTEKHLASLYGIPSNHKNEAMLSMPASMASSLHMSPALAMSMDFSAYGGLLPQSFIQREFFSKLGELAAGIKPDGRSLNERCNVCGAELPDNEAIEQHRKLHSGMKTYGCELCGKRFLDSLRLRMHLLSHSAGEKAIVCDQCGAQFQKEDALEAHRQIHTGSDMAIFCLLCGKRFQTQTALQQHMEVHAGVRSYICSECNRTFPSHTALKRHLRSHTAGDHPFECEFCGSCFRDESTLKGHKRIHTGEKPYECNGCGKKFSLKHQLETHYRVHTGEKPFECKLCHQRSRDYSAMIKHLRTHNGASPYQCTICLEYCPSLSAMQKHMKGHKPEDIPPDWRIEKTYLYLCYV.

The BTB domain maps to 34-96 (CDVVIMVDSQ…AYTATLQAKV (63 aa)). 2 disordered regions span residues 130–167 (ENDTEVNMNDGGTEDDEERKGRHGRNLVGSKKHSTEES) and 248–289 (VDES…RSSV). Residues 270–279 (RSGEPDKNRD) show a composition bias toward basic and acidic residues. Phosphothreonine is present on T283. 9 C2H2-type zinc fingers span residues 401–423 (ERCNVCGAELPDNEAIEQHRKLH), 429–451 (YGCELCGKRFLDSLRLRMHLLSH), 458–480 (IVCDQCGAQFQKEDALEAHRQIH), 487–509 (IFCLLCGKRFQTQTALQQHMEVH), 515–537 (YICSECNRTFPSHTALKRHLRSH), 544–566 (FECEFCGSCFRDESTLKGHKRIH), 572–594 (YECNGCGKKFSLKHQLETHYRVH), 600–622 (FECKLCHQRSRDYSAMIKHLRTH), and 628–650 (YQCTICLEYCPSLSAMQKHMKGH).

This sequence belongs to the krueppel C2H2-type zinc-finger protein family. In terms of assembly, interacts with btbd6a (via BTB domain). Polyubiquitinated, leading to its proteasomal degradation. In terms of tissue distribution, during early stages of primary neurogenesis, expressed in the neural epithelium, with highest levels in the forebrain and midbrain. Also expressed in a posterior-to-anterior gradient in the caudal neural plate at the 3-6 somite stage.

It localises to the nucleus. It is found in the cytoplasm. Its pathway is protein modification; protein ubiquitination. Its function is as follows. Probable transcription factor. Probable substrate-recognition component of an E3 ubiquitin-protein ligase complex which mediates the ubiquitination and subsequent proteasomal degradation of target proteins. Inhibits neurogenesis. This chain is Zinc finger and BTB domain-containing protein 16-A, found in Danio rerio (Zebrafish).